We begin with the raw amino-acid sequence, 531 residues long: Isocitrate lyase (531 aa).

Substrate is bound at residue S101–W103. D184 is a Mg(2+) binding site. The active-site Proton acceptor is C222. Substrate is bound by residues G223–H224, N380–S384, and T451.

The protein belongs to the isocitrate lyase/PEP mutase superfamily. Isocitrate lyase family. As to quaternary structure, homotetramer. Mg(2+) is required as a cofactor.

It catalyses the reaction D-threo-isocitrate = glyoxylate + succinate. It participates in carbohydrate metabolism; glyoxylate cycle; (S)-malate from isocitrate: step 1/2. In terms of biological role, involved in the metabolic adaptation in response to environmental changes. Catalyzes the reversible formation of succinate and glyoxylate from isocitrate, a key step of the glyoxylate cycle, which operates as an anaplerotic route for replenishing the tricarboxylic acid cycle during growth on fatty acid substrates. This Pseudomonas aeruginosa (strain ATCC 15692 / DSM 22644 / CIP 104116 / JCM 14847 / LMG 12228 / 1C / PRS 101 / PAO1) protein is Isocitrate lyase.